Consider the following 218-residue polypeptide: Small ribosomal subunit protein uS3c (218 aa).

One can recognise a KH type-2 domain in the interval 43–118; sequence IKNYVQKNPR…RLNIAIARIS (76 aa).

Belongs to the universal ribosomal protein uS3 family. Part of the 30S ribosomal subunit.

It is found in the plastid. It localises to the chloroplast. This Acorus calamus (Sweet flag) protein is Small ribosomal subunit protein uS3c (rps3).